The chain runs to 401 residues: Flagellin D (401 aa).

Belongs to the bacterial flagellin family.

The protein localises to the secreted. It localises to the bacterial flagellum. Its function is as follows. Flagellin is the subunit protein which polymerizes to form the filaments of bacterial flagella. The polypeptide is Flagellin D (flaD) (Rhizobium meliloti (strain 1021) (Ensifer meliloti)).